The following is a 553-amino-acid chain: General alpha-glucoside permease (553 aa).

The span at 1 to 21 (MSVDENQLENGQLLSSENEAS) shows a compositional bias: polar residues. Positions 1 to 26 (MSVDENQLENGQLLSSENEASSPFKE) are disordered. Residues 1 to 33 (MSVDENQLENGQLLSSENEASSPFKESIPSRSS) are Cytoplasmic-facing. The helical transmembrane segment at 34 to 54 (LYLIALTVSLLGVQLTWSVEL) threads the bilayer. Topologically, residues 55 to 72 (GYGTPYLFSLGLRKEWTS) are extracellular. The chain crosses the membrane as a helical span at residues 73-93 (IIWIAGPLTGILIQPIAGILS). Residues 94 to 111 (DRVNSRIGRRRPFMLCAS) are Cytoplasmic-facing. The helical transmembrane segment at 112–132 (LLGTFSLFLMGWAPDICLFIF) threads the bilayer. The Extracellular segment spans residues 133-140 (SNEVLMKR). A helical membrane pass occupies residues 141–161 (VTIVLATISIYLLDVAVNVVM). The Cytoplasmic segment spans residues 162–186 (ASTRSLIVDSVRSDQQHEANSWAGR). A helical transmembrane segment spans residues 187–207 (MIGVGNVLGYLLGYLPLYRIF). The Extracellular portion of the chain corresponds to 208–216 (SFLNFTQLQ). Residues 217-237 (VFCVLASISLVLTVTITTIFV) traverse the membrane as a helical segment. Residues 238 to 280 (SERRFPPVEHEKSVAGEIFEFFTTMRQSITALPFTLKRICFVQ) are Cytoplasmic-facing. The chain crosses the membrane as a helical span at residues 281–301 (FFAYFGWFPFLFYITTYVGIL). Topologically, residues 302–322 (YLRHAPKGHEEDWDMATRQGS) are extracellular. A helical membrane pass occupies residues 323–343 (FALLLFAIISLAANTALPLLL). Topologically, residues 344 to 424 (EDTEDDEEDE…SKVQIKGLTL (81 aa)) are cytoplasmic. Positions 368–399 (NDLGNIRTGTNTPRLGNLSETTSFRSENEPSR) are disordered. The segment covering 374–392 (RTGTNTPRLGNLSETTSFR) has biased composition (polar residues). The chain crosses the membrane as a helical span at residues 425-445 (PILWLSSHVLFGVCMLSTIFL). Over 446 to 452 (QTSWQAQ) the chain is Extracellular. The chain crosses the membrane as a helical span at residues 453 to 473 (AMVAICGLSWACTLWIPYSLF). The Cytoplasmic portion of the chain corresponds to 474 to 494 (SSEIGKLGLRESSGKMIGVHN). A helical transmembrane segment spans residues 495–515 (VFISAPQVLSTIIATIVFIQS). The Extracellular segment spans residues 516-521 (EGSHRD). Residues 522-542 (IADNSIAWVLRIGGISAFLAA) traverse the membrane as a helical segment. The Cytoplasmic segment spans residues 543–553 (YQCRHLLPINF).

It belongs to the glycoside-pentoside-hexuronide (GPH) cation symporter transporter (TC 2.A.2.4) family.

It is found in the membrane. Functionally, responsible for the transport of maltose and sucrose into the cell, with the concomitant uptake of protons (symport system). The polypeptide is General alpha-glucoside permease (sut1) (Schizosaccharomyces pombe (strain 972 / ATCC 24843) (Fission yeast)).